We begin with the raw amino-acid sequence, 784 residues long: Protein Skeletor, isoforms B/C (784 aa).

Residues 1–28 form the signal peptide; the sequence is MLAMKDKPWLLLFGLLAALSCLASFGDA. DM13 domains lie at 34–143 and 151–258; these read GTKI…VSIP and PQKI…VRLP. Residues 287–419 enclose the DOMON domain; that stretch reads LAFEVRWAVA…GAESVVWAIG (133 aa). Positions 451–491 are disordered; it reads PLPEGARGNSNSSEQEDSAPAAQSSTGGAGYPPAGRPNVEP.

As to quaternary structure, interacts with Chro and Mgtor as part of a macromolecular complex forming the spindle matrix. Chro colocalizes with Skeletor (Skel) on the chromosomes at interphase and on spindle during metaphase.

Its subcellular location is the cytoplasm. The protein localises to the cytoskeleton. The protein resides in the spindle. It localises to the nucleus. It is found in the nucleolus. Its subcellular location is the chromosome. Its function is as follows. Provides structural support to stabilize and organize the microtubule spindle during mitosis (within embryonic somatic cells) and meiosis (within spermatocytes). The role in mitosis regulation depends on the Ran pathway. The polypeptide is Protein Skeletor, isoforms B/C (Drosophila melanogaster (Fruit fly)).